The chain runs to 208 residues: Putative 3-methyladenine DNA glycosylase (208 aa).

The protein belongs to the DNA glycosylase MPG family.

This chain is Putative 3-methyladenine DNA glycosylase, found in Lactobacillus delbrueckii subsp. bulgaricus (strain ATCC BAA-365 / Lb-18).